Consider the following 465-residue polypeptide: Kynureninase (465 aa).

Residue M1 is modified to N-acetylmethionine. Residues L137, T138, 165 to 168 (FPSD), S221, D250, H253, and Y275 each bind pyridoxal 5'-phosphate. An N6-(pyridoxal phosphate)lysine modification is found at K276. Residues W305 and N333 each contribute to the pyridoxal 5'-phosphate site.

Belongs to the kynureninase family. Homodimer. Pyridoxal 5'-phosphate serves as cofactor. As to expression, expressed in all tissues tested (heart, brain placenta, lung, liver, skeletal muscle, kidney and pancreas). Highest levels found in placenta, liver and lung. Expressed in all brain regions.

Its subcellular location is the cytoplasm. It is found in the cytosol. The catalysed reaction is L-kynurenine + H2O = anthranilate + L-alanine + H(+). It carries out the reaction 3-hydroxy-L-kynurenine + H2O = 3-hydroxyanthranilate + L-alanine + H(+). It functions in the pathway amino-acid degradation; L-kynurenine degradation; L-alanine and anthranilate from L-kynurenine: step 1/1. Its pathway is cofactor biosynthesis; NAD(+) biosynthesis; quinolinate from L-kynurenine: step 2/3. Inhibited by o-methoxybenzoylalanine (OMBA). Its function is as follows. Catalyzes the cleavage of L-kynurenine (L-Kyn) and L-3-hydroxykynurenine (L-3OHKyn) into anthranilic acid (AA) and 3-hydroxyanthranilic acid (3-OHAA), respectively. Has a preference for the L-3-hydroxy form. Also has cysteine-conjugate-beta-lyase activity. In Homo sapiens (Human), this protein is Kynureninase.